The sequence spans 181 residues: GATA zinc finger domain-containing protein 22 (181 aa).

The GATA-type zinc-finger motif lies at 118–145; it reads CQICLTNNTPYWRWSVIENNKIRVCNRC.

The chain is GATA zinc finger domain-containing protein 22 (gtaV) from Dictyostelium discoideum (Social amoeba).